The following is a 303-amino-acid chain: Probable 5-dehydro-4-deoxyglucarate dehydratase (303 aa).

It belongs to the DapA family.

It carries out the reaction 5-dehydro-4-deoxy-D-glucarate + H(+) = 2,5-dioxopentanoate + CO2 + H2O. Its pathway is carbohydrate acid metabolism; D-glucarate degradation; 2,5-dioxopentanoate from D-glucarate: step 2/2. This is Probable 5-dehydro-4-deoxyglucarate dehydratase from Leptothrix cholodnii (strain ATCC 51168 / LMG 8142 / SP-6) (Leptothrix discophora (strain SP-6)).